The primary structure comprises 319 residues: Lipase 1 (319 aa).

Ser189 (nucleophile) is an active-site residue. Residues Asp314 and Asp317 each contribute to the Ca(2+) site.

The enzyme catalyses a triacylglycerol + H2O = a diacylglycerol + a fatty acid + H(+). In Moraxella sp. (strain TA144), this protein is Lipase 1 (lip1).